The following is a 120-amino-acid chain: Large ribosomal subunit protein bL12 (120 aa).

Belongs to the bacterial ribosomal protein bL12 family. Homodimer. Part of the ribosomal stalk of the 50S ribosomal subunit. Forms a multimeric L10(L12)X complex, where L10 forms an elongated spine to which 2 to 4 L12 dimers bind in a sequential fashion. Binds GTP-bound translation factors.

In terms of biological role, forms part of the ribosomal stalk which helps the ribosome interact with GTP-bound translation factors. Is thus essential for accurate translation. The protein is Large ribosomal subunit protein bL12 of Haemophilus ducreyi (strain 35000HP / ATCC 700724).